The chain runs to 398 residues: Elongation factor Tu (398 aa).

The region spanning 10–208 (KPHVNVGTIG…ALDSHIPEPT (199 aa)) is the tr-type G domain. A G1 region spans residues 19-26 (GHIDHGKT). A GTP-binding site is contributed by 19 to 26 (GHIDHGKT). T26 provides a ligand contact to Mg(2+). The interval 60 to 64 (TKTVT) is G2. Positions 83–86 (DCPG) are G3. Residues 83-87 (DCPGH) and 138-141 (NKCD) contribute to the GTP site. The tract at residues 138–141 (NKCD) is G4. Residues 176 to 178 (SSL) form a G5 region.

The protein belongs to the TRAFAC class translation factor GTPase superfamily. Classic translation factor GTPase family. EF-Tu/EF-1A subfamily. In terms of assembly, monomer.

It is found in the cytoplasm. It catalyses the reaction GTP + H2O = GDP + phosphate + H(+). Functionally, GTP hydrolase that promotes the GTP-dependent binding of aminoacyl-tRNA to the A-site of ribosomes during protein biosynthesis. The chain is Elongation factor Tu from Rhodopirellula baltica (strain DSM 10527 / NCIMB 13988 / SH1).